Reading from the N-terminus, the 991-residue chain is Pro-apoptotic serine protease NMA111 (991 aa).

Residues 1-57 form a disordered region; sequence MTVGKRKLSNGTVNEAKRLDDHVPVVAPSTNPDFENANGEDNEDIDDYSSEGEMSPQ. A compositionally biased stretch (acidic residues) spans 38 to 50; sequence NGEDNEDIDDYSS. A serine protease region spans residues 86–269; the sequence is HVSNFDTESS…LPVYRPLRAL (184 aa). Active-site charge relay system residues include His-117, Asp-148, and Ser-231. PDZ domains follow at residues 296–374 and 885–957; these read RRLG…QRNG and PHHG…VSFD.

It belongs to the peptidase S1C family.

It localises to the nucleus. In terms of biological role, nuclear serine protease which mediates apoptosis. This is Pro-apoptotic serine protease NMA111 (NMA111) from Meyerozyma guilliermondii (strain ATCC 6260 / CBS 566 / DSM 6381 / JCM 1539 / NBRC 10279 / NRRL Y-324) (Yeast).